A 320-amino-acid chain; its full sequence is MGARVIDGRPIAGELKKRVASEVEGLAARGVRPGLATVLVGEDYAARAYERRVGGLAAELGCRYVCERLPREAEEADVLAVVGKLNADPRVSGILVLRPLPGHISEPAVFSALDPLKDIEAVHPVNAGLLALGRPRYVPSTPAACFYLLDRYLERSGRPPEEFYPRSTVVVVGRSNNVGKPAVSLGFARGAAVISCDANAYRAGRLREHTLKADALIVAAGVAGLIDESYVREGVIAVDVGINPVADPGGSGRTLLVGDLDFGSVARKAEALTPVPGGVGPITDVWLLKNTVAAGRGLAFRARSGGERGAPGISGGYGGQ.

NADP(+) is bound by residues 173–175 (GRS) and I242.

Belongs to the tetrahydrofolate dehydrogenase/cyclohydrolase family. Homodimer.

It carries out the reaction (6R)-5,10-methylene-5,6,7,8-tetrahydrofolate + NADP(+) = (6R)-5,10-methenyltetrahydrofolate + NADPH. The catalysed reaction is (6R)-5,10-methenyltetrahydrofolate + H2O = (6R)-10-formyltetrahydrofolate + H(+). It participates in one-carbon metabolism; tetrahydrofolate interconversion. Functionally, catalyzes the oxidation of 5,10-methylenetetrahydrofolate to 5,10-methenyltetrahydrofolate and then the hydrolysis of 5,10-methenyltetrahydrofolate to 10-formyltetrahydrofolate. The sequence is that of Bifunctional protein FolD 2 from Rubrobacter xylanophilus (strain DSM 9941 / JCM 11954 / NBRC 16129 / PRD-1).